Reading from the N-terminus, the 454-residue chain is Caspase-9 (454 aa).

The CARD domain maps to 1-92 (MDEADRQLLR…GTLASLLQSG (92 aa)). Thr-163 bears the Phosphothreonine; by MAPK1 mark. Phosphotyrosine; by ABL1 is present on Tyr-191. Catalysis depends on residues His-275 and Cys-325. A phosphoserine mark is found at Ser-340 and Ser-348. Residues 354–367 (AVPYQEGPRPLDQL) constitute a propeptide that is removed on maturation.

Belongs to the peptidase C14A family. In terms of assembly, heterotetramer that consists of two anti-parallel arranged heterodimers, each one formed by a 35 kDa (p35) and a 10 kDa (p10) subunit. Caspase-9 and APAF1 bind to each other via their respective NH2-terminal CED-3 homologous domains in the presence of cytochrome C and ATP. Interacts (inactive form) with EFHD2. Interacts with HAX1. Interacts with BIRC2/c-IAP1, XIAP/BIRC4, BIRC5/survivin, BIRC6/bruce and BIRC7/livin. Interacts with ABL1 (via SH3 domain); the interaction is direct and increased in the response of cells to genotoxic stress and ABL1/c-Abl activation. Interacts with BCL2L10. Post-translationally, cleavages at Asp-353 by granzyme B and at Asp-368 by caspase-3 generate the two active subunits. Caspase-8 and -10 can also be involved in these processing events. Phosphorylated at Thr-163 by MAPK1/ERK2. Phosphorylation at Thr-163 is sufficient to block caspase-9 processing and subsequent caspase-3 activation. Phosphorylation on Tyr-191 by ABL1/c-Abl; occurs in the response of cells to DNA damage. In terms of processing, ubiquitinated by BIRC6; this activity is inhibited by DIABLO/SMAC.

The catalysed reaction is Strict requirement for an Asp residue at position P1 and with a marked preference for His at position P2. It has a preferred cleavage sequence of Leu-Gly-His-Asp-|-Xaa.. Inhibited by BIRC6; following inhibition of BIRC6-caspase binding by DIABLO/SMAC, BIRC6 is subjected to caspase cleavage, leading to an increase in active caspases. Functionally, involved in the activation cascade of caspases responsible for apoptosis execution. Binding of caspase-9 to Apaf-1 leads to activation of the protease which then cleaves and activates effector caspases caspase-3 (CASP3) or caspase-7 (CASP7). Promotes DNA damage-induced apoptosis in a ABL1/c-Abl-dependent manner. Proteolytically cleaves poly(ADP-ribose) polymerase (PARP). Cleaves BIRC6 following inhibition of BIRC6-caspase binding by DIABLO/SMAC. This chain is Caspase-9 (Casp9), found in Mus musculus (Mouse).